Here is a 149-residue protein sequence, read N- to C-terminus: SsrA-binding protein (149 aa).

This sequence belongs to the SmpB family.

It is found in the cytoplasm. Required for rescue of stalled ribosomes mediated by trans-translation. Binds to transfer-messenger RNA (tmRNA), required for stable association of tmRNA with ribosomes. tmRNA and SmpB together mimic tRNA shape, replacing the anticodon stem-loop with SmpB. tmRNA is encoded by the ssrA gene; the 2 termini fold to resemble tRNA(Ala) and it encodes a 'tag peptide', a short internal open reading frame. During trans-translation Ala-aminoacylated tmRNA acts like a tRNA, entering the A-site of stalled ribosomes, displacing the stalled mRNA. The ribosome then switches to translate the ORF on the tmRNA; the nascent peptide is terminated with the 'tag peptide' encoded by the tmRNA and targeted for degradation. The ribosome is freed to recommence translation, which seems to be the essential function of trans-translation. This is SsrA-binding protein from Mesoplasma florum (strain ATCC 33453 / NBRC 100688 / NCTC 11704 / L1) (Acholeplasma florum).